The sequence spans 305 residues: tRNA pseudouridine synthase B (305 aa).

D48 functions as the Nucleophile in the catalytic mechanism.

It belongs to the pseudouridine synthase TruB family. Type 1 subfamily.

The catalysed reaction is uridine(55) in tRNA = pseudouridine(55) in tRNA. Functionally, responsible for synthesis of pseudouridine from uracil-55 in the psi GC loop of transfer RNAs. This Pseudomonas fluorescens (strain ATCC BAA-477 / NRRL B-23932 / Pf-5) protein is tRNA pseudouridine synthase B.